A 216-amino-acid polypeptide reads, in one-letter code: Dimethylamine corrinoid protein 2 (216 aa).

Residues 1–91 (MASKEELLQE…EMPAGTETKK (91 aa)) enclose the B12-binding N-terminal domain. The 125-residue stretch at 92–216 (LGVIVNGTVE…AKAKELLLGK (125 aa)) folds into the B12-binding domain. Position 105 (H105) interacts with methylcob(III)alamin.

It belongs to the methylamine corrinoid protein family.

It functions in the pathway one-carbon metabolism; methanogenesis from dimethylamine. Its function is as follows. Acts as a methyl group carrier between MtbB and MtbA. In Methanosarcina acetivorans (strain ATCC 35395 / DSM 2834 / JCM 12185 / C2A), this protein is Dimethylamine corrinoid protein 2 (mtbC2).